The primary structure comprises 184 residues: Ribosome-recycling factor (184 aa).

This sequence belongs to the RRF family.

The protein localises to the cytoplasm. In terms of biological role, responsible for the release of ribosomes from messenger RNA at the termination of protein biosynthesis. May increase the efficiency of translation by recycling ribosomes from one round of translation to another. The polypeptide is Ribosome-recycling factor (Oleidesulfovibrio alaskensis (strain ATCC BAA-1058 / DSM 17464 / G20) (Desulfovibrio alaskensis)).